The sequence spans 1099 residues: ATP-dependent helicase/deoxyribonuclease subunit B (1099 aa).

[4Fe-4S] cluster contacts are provided by Cys766, Cys1056, Cys1059, and Cys1065.

Belongs to the helicase family. AddB/RexB type 2 subfamily. Heterodimer of AddA and RexB. The cofactor is Mg(2+). [4Fe-4S] cluster is required as a cofactor.

The heterodimer acts as both an ATP-dependent DNA helicase and an ATP-dependent, dual-direction single-stranded exonuclease. Recognizes the chi site generating a DNA molecule suitable for the initiation of homologous recombination. This subunit has 5' -&gt; 3' nuclease activity but not helicase activity. The sequence is that of ATP-dependent helicase/deoxyribonuclease subunit B from Lactococcus lactis subsp. cremoris (strain SK11).